A 274-amino-acid polypeptide reads, in one-letter code: Ribosomal RNA small subunit methyltransferase A (274 aa).

S-adenosyl-L-methionine is bound by residues N28, L30, G55, E77, D103, and N122.

Belongs to the class I-like SAM-binding methyltransferase superfamily. rRNA adenine N(6)-methyltransferase family. RsmA subfamily.

It localises to the cytoplasm. The enzyme catalyses adenosine(1518)/adenosine(1519) in 16S rRNA + 4 S-adenosyl-L-methionine = N(6)-dimethyladenosine(1518)/N(6)-dimethyladenosine(1519) in 16S rRNA + 4 S-adenosyl-L-homocysteine + 4 H(+). Specifically dimethylates two adjacent adenosines (A1518 and A1519) in the loop of a conserved hairpin near the 3'-end of 16S rRNA in the 30S particle. May play a critical role in biogenesis of 30S subunits. The protein is Ribosomal RNA small subunit methyltransferase A of Rhizobium meliloti (strain 1021) (Ensifer meliloti).